The chain runs to 154 residues: Decarboxylase claH (154 aa).

Belongs to the tpcK family.

It carries out the reaction atrochrysone carboxylate + H(+) = atrochrysone + CO2. The protein operates within pigment biosynthesis. Its function is as follows. Decarboxylase involved in the biosynthesis of the bianthraquinone cladofulvin, a conidial pigment not required for virulence but that plays a role in fitness and resistance to environmental stresses including UV light and low-temperature stress. The pathway begins with the synthesis of atrochrysone thioester by the polyketide synthase (PKS) claG. The atrochrysone carboxyl ACP thioesterase claF then breaks the thioester bond and releases the atrochrysone carboxylic acid from claG. This compound is decarboxylated by claH to yield emodin, which is further converted to chrysophanol hydroquinone by the reductase claC and the dehydratase claB. The cytochrome monooxygenase P450 claM then catalyzes the dimerization of nataloe-emodin to cladofulvin. In Passalora fulva (Tomato leaf mold), this protein is Decarboxylase claH.